The primary structure comprises 348 residues: tRNA pseudouridine synthase B (348 aa).

Asp-52 functions as the Nucleophile in the catalytic mechanism.

The protein belongs to the pseudouridine synthase TruB family. Type 1 subfamily.

The catalysed reaction is uridine(55) in tRNA = pseudouridine(55) in tRNA. Functionally, responsible for synthesis of pseudouridine from uracil-55 in the psi GC loop of transfer RNAs. The sequence is that of tRNA pseudouridine synthase B from Rhodopirellula baltica (strain DSM 10527 / NCIMB 13988 / SH1).